The primary structure comprises 188 residues: ATP synthase subunit b 1 (188 aa).

The chain crosses the membrane as a helical span at residues valine 35–isoleucine 55.

The protein belongs to the ATPase B chain family. F-type ATPases have 2 components, F(1) - the catalytic core - and F(0) - the membrane proton channel. F(1) has five subunits: alpha(3), beta(3), gamma(1), delta(1), epsilon(1). F(0) has three main subunits: a(1), b(2) and c(10-14). The alpha and beta chains form an alternating ring which encloses part of the gamma chain. F(1) is attached to F(0) by a central stalk formed by the gamma and epsilon chains, while a peripheral stalk is formed by the delta and b chains.

The protein localises to the cell inner membrane. F(1)F(0) ATP synthase produces ATP from ADP in the presence of a proton or sodium gradient. F-type ATPases consist of two structural domains, F(1) containing the extramembraneous catalytic core and F(0) containing the membrane proton channel, linked together by a central stalk and a peripheral stalk. During catalysis, ATP synthesis in the catalytic domain of F(1) is coupled via a rotary mechanism of the central stalk subunits to proton translocation. Its function is as follows. Component of the F(0) channel, it forms part of the peripheral stalk, linking F(1) to F(0). In Bartonella henselae (strain ATCC 49882 / DSM 28221 / CCUG 30454 / Houston 1) (Rochalimaea henselae), this protein is ATP synthase subunit b 1.